We begin with the raw amino-acid sequence, 79 residues long: Conotoxin VnMKLT1-01122 (79 aa).

Residues 1 to 22 form the signal peptide; sequence MKLTCMKIVAVLFLTAWTFVTA. A propeptide spanning residues 23–48 is cleaved from the precursor; it reads DDSRNGLEYLFPKAHYEMNPEASKLN. Pyrrolidone carboxylic acid is present on Gln-51. Cystine bridges form between Cys-53/Cys-70, Cys-60/Cys-74, and Cys-69/Cys-78.

It belongs to the conotoxin O1 superfamily. As to expression, expressed by the venom duct.

Its subcellular location is the secreted. This chain is Conotoxin VnMKLT1-01122, found in Conus ventricosus (Mediterranean cone).